Reading from the N-terminus, the 89-residue chain is Small ribosomal subunit protein uS17 (89 aa).

The protein belongs to the universal ribosomal protein uS17 family. Part of the 30S ribosomal subunit.

Functionally, one of the primary rRNA binding proteins, it binds specifically to the 5'-end of 16S ribosomal RNA. The protein is Small ribosomal subunit protein uS17 of Xylella fastidiosa (strain M12).